A 272-amino-acid polypeptide reads, in one-letter code: Outer surface protein A (272 aa).

The N-terminal stretch at 1–16 (MKKYLLGIGLILALIA) is a signal peptide. A lipid anchor (N-palmitoyl cysteine) is attached at Cys17. Cys17 carries S-diacylglycerol cysteine lipidation.

The protein belongs to the OspA lipoprotein family.

Its subcellular location is the cell outer membrane. It is found in the cell surface. The protein is Outer surface protein A of Borreliella burgdorferi (Lyme disease spirochete).